The chain runs to 196 residues: Cell division protein SepF (196 aa).

The segment at 15 to 80 (VEDDEEFNEP…PKRSASTFSK (66 aa)) is disordered. The segment covering 56–79 (RPAQSTPKPQAQTAAPKRSASTFS) has biased composition (polar residues).

The protein belongs to the SepF family. In terms of assembly, homodimer. Interacts with FtsZ.

Its subcellular location is the cytoplasm. In terms of biological role, cell division protein that is part of the divisome complex and is recruited early to the Z-ring. Probably stimulates Z-ring formation, perhaps through the cross-linking of FtsZ protofilaments. Its function overlaps with FtsA. The chain is Cell division protein SepF from Lactococcus lactis subsp. cremoris (strain SK11).